The sequence spans 155 residues: RNA pyrophosphohydrolase (155 aa).

Positions 5-147 (RYRPNVAAIV…KRPVYKKVLE (143 aa)) constitute a Nudix hydrolase domain. Residues 42-63 (GGIDKGESPKEALLRELKEEIG) carry the Nudix box motif.

This sequence belongs to the Nudix hydrolase family. RppH subfamily. A divalent metal cation is required as a cofactor.

Accelerates the degradation of transcripts by removing pyrophosphate from the 5'-end of triphosphorylated RNA, leading to a more labile monophosphorylated state that can stimulate subsequent ribonuclease cleavage. This is RNA pyrophosphohydrolase from Nitratiruptor sp. (strain SB155-2).